Here is a 287-residue protein sequence, read N- to C-terminus: Protease HtpX (287 aa).

2 helical membrane passes run 4 to 24 (IFLL…VMSI) and 33 to 53 (GGLL…SLAI). Residue histidine 139 coordinates Zn(2+). Glutamate 140 is a catalytic residue. Position 143 (histidine 143) interacts with Zn(2+). A run of 2 helical transmembrane segments spans residues 154-174 (LIQG…AGII) and 195-215 (AVVF…VAYF). Residue glutamate 220 coordinates Zn(2+).

Belongs to the peptidase M48B family. The cofactor is Zn(2+).

Its subcellular location is the cell inner membrane. The polypeptide is Protease HtpX (Shewanella putrefaciens (strain CN-32 / ATCC BAA-453)).